The following is a 407-amino-acid chain: S-adenosylmethionine synthase (407 aa).

140–145 contacts ATP; it reads GQGSAD.

Belongs to the AdoMet synthase 2 family. Requires Mg(2+) as cofactor.

The enzyme catalyses L-methionine + ATP + H2O = S-adenosyl-L-methionine + phosphate + diphosphate. The protein operates within amino-acid biosynthesis; S-adenosyl-L-methionine biosynthesis; S-adenosyl-L-methionine from L-methionine: step 1/1. Catalyzes the formation of S-adenosylmethionine from methionine and ATP. This is S-adenosylmethionine synthase from Methanosphaera stadtmanae (strain ATCC 43021 / DSM 3091 / JCM 11832 / MCB-3).